A 475-amino-acid polypeptide reads, in one-letter code: 23S rRNA (uracil(1939)-C(5))-methyltransferase RlmD (475 aa).

A compositionally biased stretch (basic residues) spans 1–10 (MAMLGKRRPP). The tract at residues 1–33 (MAMLGKRRPPRTANERVRRERGSATRRDDATAD) is disordered. Residues 13–30 (ANERVRRERGSATRRDDA) are compositionally biased toward basic and acidic residues. Residues 26-85 (RRDDATADGLSIERLAHDGRGVARDPHGKTVFVDQALPGERVRVAVHRQRKRFDEAHVVE) enclose the TRAM domain. [4Fe-4S] cluster-binding residues include Cys98, Cys104, Cys107, and Cys183. S-adenosyl-L-methionine contacts are provided by Gln294, Phe323, Asn328, Glu344, Asp371, and Asp388. Cys414 acts as the Nucleophile in catalysis. Positions 455–475 (TRDTPRGRSTSVEREDHGQGP) are disordered. Residues 457 to 475 (DTPRGRSTSVEREDHGQGP) are compositionally biased toward basic and acidic residues.

Belongs to the class I-like SAM-binding methyltransferase superfamily. RNA M5U methyltransferase family. RlmD subfamily.

The enzyme catalyses uridine(1939) in 23S rRNA + S-adenosyl-L-methionine = 5-methyluridine(1939) in 23S rRNA + S-adenosyl-L-homocysteine + H(+). Catalyzes the formation of 5-methyl-uridine at position 1939 (m5U1939) in 23S rRNA. The polypeptide is 23S rRNA (uracil(1939)-C(5))-methyltransferase RlmD (Chromohalobacter salexigens (strain ATCC BAA-138 / DSM 3043 / CIP 106854 / NCIMB 13768 / 1H11)).